The chain runs to 388 residues: Succinate--CoA ligase [ADP-forming] subunit beta (388 aa).

Positions 9–244 (KEIFRSMGVA…LEEEDPKEIE (236 aa)) constitute an ATP-grasp domain. ATP-binding positions include K46, 53 to 55 (GRG), E99, C102, and E107. N199 and D213 together coordinate Mg(2+). Substrate is bound by residues N264 and 321–323 (GIM).

It belongs to the succinate/malate CoA ligase beta subunit family. Heterotetramer of two alpha and two beta subunits. Mg(2+) is required as a cofactor.

The catalysed reaction is succinate + ATP + CoA = succinyl-CoA + ADP + phosphate. It carries out the reaction GTP + succinate + CoA = succinyl-CoA + GDP + phosphate. Its pathway is carbohydrate metabolism; tricarboxylic acid cycle; succinate from succinyl-CoA (ligase route): step 1/1. Succinyl-CoA synthetase functions in the citric acid cycle (TCA), coupling the hydrolysis of succinyl-CoA to the synthesis of either ATP or GTP and thus represents the only step of substrate-level phosphorylation in the TCA. The beta subunit provides nucleotide specificity of the enzyme and binds the substrate succinate, while the binding sites for coenzyme A and phosphate are found in the alpha subunit. The protein is Succinate--CoA ligase [ADP-forming] subunit beta of Staphylococcus aureus (strain Mu3 / ATCC 700698).